Consider the following 130-residue polypeptide: Small ribosomal subunit protein uS8 (130 aa).

The protein belongs to the universal ribosomal protein uS8 family. As to quaternary structure, part of the 30S ribosomal subunit. Contacts proteins S5 and S12.

Its function is as follows. One of the primary rRNA binding proteins, it binds directly to 16S rRNA central domain where it helps coordinate assembly of the platform of the 30S subunit. This chain is Small ribosomal subunit protein uS8, found in Ectopseudomonas mendocina (strain ymp) (Pseudomonas mendocina).